The sequence spans 883 residues: Alanine--tRNA ligase (883 aa).

Positions 570, 574, 672, and 676 each coordinate Zn(2+).

It belongs to the class-II aminoacyl-tRNA synthetase family. Zn(2+) serves as cofactor.

The protein resides in the cytoplasm. The catalysed reaction is tRNA(Ala) + L-alanine + ATP = L-alanyl-tRNA(Ala) + AMP + diphosphate. Catalyzes the attachment of alanine to tRNA(Ala) in a two-step reaction: alanine is first activated by ATP to form Ala-AMP and then transferred to the acceptor end of tRNA(Ala). Also edits incorrectly charged Ser-tRNA(Ala) and Gly-tRNA(Ala) via its editing domain. In Heliobacterium modesticaldum (strain ATCC 51547 / Ice1), this protein is Alanine--tRNA ligase.